The following is an 89-amino-acid chain: Acyl-CoA-binding protein (89 aa).

The 86-residue stretch at 3 to 88 (LKEEFEEHAE…VKQLFEAAGS (86 aa)) folds into the ACB domain. Residues 30-34 (YGLYK), K56, and Y75 contribute to the an acyl-CoA site.

Belongs to the ACBP family.

In terms of biological role, binds medium- and long-chain acyl-CoA esters with very high affinity and may function as an intracellular carrier of acyl-CoA esters. This chain is Acyl-CoA-binding protein, found in Gossypium hirsutum (Upland cotton).